A 297-amino-acid polypeptide reads, in one-letter code: Cell death peptidase (297 aa).

2 helical membrane-spanning segments follow: residues 61-82 (IVLT…WVFT) and 149-178 (IFLC…AFST).

It belongs to the peptidase U49 family.

The protein resides in the cell membrane. Functionally, interacts with a short DNA sequence about one-quarter of the way into the major capsid protein gene 23 of T4; general translation inhibition occurs when this late gene of the virus is expressed. The polypeptide is Cell death peptidase (lit) (Escherichia coli (strain K12)).